Here is a 268-residue protein sequence, read N- to C-terminus: Protein MSS18 (268 aa).

It to baculovirus occlusion-derived virus envelope protein E27 (ODV-E27).

The protein resides in the mitochondrion. Involved in splicing of intron aI5-beta of the mitochondrial COX1 transcript. The polypeptide is Protein MSS18 (MSS18) (Saccharomyces cerevisiae (strain ATCC 204508 / S288c) (Baker's yeast)).